Consider the following 285-residue polypeptide: Iodotyrosine deiodinase 1 (285 aa).

A helical transmembrane segment spans residues 1-21; the sequence is MFLLTPVLVAVVCILVIWVFK. Residues 96 to 100 and 124 to 125 contribute to the FMN site; these read RRSIR and SG. Residues alanine 126, glutamate 153, tyrosine 157, and lysine 178 each contribute to the 3,5-diiodo-L-tyrosine site. Residues alanine 126, glutamate 153, tyrosine 157, and lysine 178 each coordinate 3-iodo-L-tyrosine. FMN contacts are provided by residues 233–235 and arginine 275; that span reads TTT.

The protein belongs to the nitroreductase family. In terms of assembly, homodimer. FMN is required as a cofactor.

It localises to the cell membrane. It is found in the cytoplasmic vesicle membrane. The catalysed reaction is 2 iodide + L-tyrosine + 2 NADP(+) = 3,5-diiodo-L-tyrosine + 2 NADPH + H(+). The enzyme catalyses iodide + L-tyrosine + NADP(+) = 3-iodo-L-tyrosine + NADPH. It carries out the reaction 3-iodo-L-tyrosine + iodide + NADP(+) = 3,5-diiodo-L-tyrosine + NADPH + H(+). It catalyses the reaction L-tyrosine + chloride + NADP(+) = 3-chloro-L-tyrosine + NADPH. The catalysed reaction is bromide + L-tyrosine + NADP(+) = 3-bromo-L-tyrosine + NADPH. In terms of biological role, catalyzes the dehalogenation of halotyrosines such as 3-bromo-L-tyrosine, 3-chloro-L-tyrosine, 3-iodo-L-tyrosine and 3,5-diiodo-L-tyrosine. During thyroid hormone biosynthesis, facilitates iodide salvage by catalysing the oxidative NADPH-dependent deiodination of the halogenated by-products of thyroid hormone production, monoiodotyrosine (L-MIT) and diiodotyrosine (L-DIT). The scavanged iodide can then reenter the hormone-producing pathways. Acts more efficiently on 3-iodo-L-tyrosine than 3,5-diiodo-L-tyrosine. The protein is Iodotyrosine deiodinase 1 (Iyd) of Rattus norvegicus (Rat).